A 380-amino-acid chain; its full sequence is MKLGVLGSTGSVGSQTLQVYENFRDEIELVGILANRASEKLLQQAKKYKPKYVVSYQEPAKEWLESLPEGVKYLKGDEGLKAIIEESERLMNAISGIYGIKPAYEVIKAGKTLLASNKESILCLGEIIRKNRERVIPVDSEHNALFQLLSSVKREEVKHVYLTASGGPFKDKSLEELKTASVEEALRHPRWNMGAKITIDSATLMNKGFEMLEAHFLFDFPIENIKVVIHPQSFVHGILELIDNSFLMHTSQTDMKIPIMHALFYPKRKEYPFKKVSLLELSPITFEKVDTTKFKAIDLAKWAGFMGGVYIPVLVGADEEAVNLFLNKKIGFLDIVDLIEQALSEVNIKDPQSVEEILEAVEWGRQKVREIYERKYAGKG.

The NADPH site is built by Thr9, Gly10, Ser11, Val12, Arg36, and Asn117. Lys118 is a 1-deoxy-D-xylulose 5-phosphate binding site. Glu119 provides a ligand contact to NADPH. Mn(2+) is bound at residue Asp139. Ser140, Glu141, Ser165, and His188 together coordinate 1-deoxy-D-xylulose 5-phosphate. Residue Glu141 coordinates Mn(2+). Gly194 is a binding site for NADPH. 1-deoxy-D-xylulose 5-phosphate contacts are provided by Ser201, Asn206, Lys207, and Glu210. Position 210 (Glu210) interacts with Mn(2+).

It belongs to the DXR family. The cofactor is Mg(2+). Mn(2+) is required as a cofactor.

It catalyses the reaction 2-C-methyl-D-erythritol 4-phosphate + NADP(+) = 1-deoxy-D-xylulose 5-phosphate + NADPH + H(+). Its pathway is isoprenoid biosynthesis; isopentenyl diphosphate biosynthesis via DXP pathway; isopentenyl diphosphate from 1-deoxy-D-xylulose 5-phosphate: step 1/6. Functionally, catalyzes the NADPH-dependent rearrangement and reduction of 1-deoxy-D-xylulose-5-phosphate (DXP) to 2-C-methyl-D-erythritol 4-phosphate (MEP). The protein is 1-deoxy-D-xylulose 5-phosphate reductoisomerase of Aquifex aeolicus (strain VF5).